A 373-amino-acid polypeptide reads, in one-letter code: Probable quinol oxidase subunit 2 (373 aa).

The first 19 residues, 1-19, serve as a signal peptide directing secretion; that stretch reads MSKFKSLLLLFGSLILLSG. C20 carries the N-palmitoyl cysteine lipid modification. C20 carries S-diacylglycerol cysteine lipidation. Helical transmembrane passes span 38–58 and 82–102; these read FLIMYSIIFMLVIIAAVLILF and LETIWFIIPVIIVIALAIPTV. Basic and acidic residues-rich tracts occupy residues 292 to 320 and 339 to 373; these read EERTADVLDKPDQPARKPEITNANYERHG and EESHNMDEMEKISEGAKDEKASKIEKKDHENGGGH. Residues 292–373 are disordered; the sequence is EERTADVLDK…KKDHENGGGH (82 aa).

This sequence belongs to the cytochrome c oxidase subunit 2 family.

It localises to the cell membrane. It carries out the reaction 2 a quinol + O2 = 2 a quinone + 2 H2O. Functionally, catalyzes quinol oxidation with the concomitant reduction of oxygen to water. Subunit II transfers the electrons from a quinol to the binuclear center of the catalytic subunit I. The sequence is that of Probable quinol oxidase subunit 2 (qoxA) from Staphylococcus saprophyticus subsp. saprophyticus (strain ATCC 15305 / DSM 20229 / NCIMB 8711 / NCTC 7292 / S-41).